Here is a 292-residue protein sequence, read N- to C-terminus: ATP phosphoribosyltransferase (292 aa).

The protein belongs to the ATP phosphoribosyltransferase family. Long subfamily. Mg(2+) is required as a cofactor.

It localises to the cytoplasm. The catalysed reaction is 1-(5-phospho-beta-D-ribosyl)-ATP + diphosphate = 5-phospho-alpha-D-ribose 1-diphosphate + ATP. Its pathway is amino-acid biosynthesis; L-histidine biosynthesis; L-histidine from 5-phospho-alpha-D-ribose 1-diphosphate: step 1/9. With respect to regulation, feedback inhibited by histidine. Its function is as follows. Catalyzes the condensation of ATP and 5-phosphoribose 1-diphosphate to form N'-(5'-phosphoribosyl)-ATP (PR-ATP). Has a crucial role in the pathway because the rate of histidine biosynthesis seems to be controlled primarily by regulation of HisG enzymatic activity. The polypeptide is ATP phosphoribosyltransferase (Thermodesulfovibrio yellowstonii (strain ATCC 51303 / DSM 11347 / YP87)).